A 552-amino-acid polypeptide reads, in one-letter code: Autoimmune regulator (552 aa).

Positions 1-106 constitute an HSR domain; the sequence is MAGGDGMLRR…ILDGFPKDVD (106 aa). 2 short sequence motifs (LXXLL motif) span residues 8 to 12 and 64 to 68; these read LRRLL and LSWLL. The disordered stretch occupies residues 109–177; that stretch reads QSRKGRKPLA…DGNLESQHLP (69 aa). A Nuclear localization signal motif is present at residues 114 to 134; that stretch reads RKPLAGPKAAVLPPRPPTKRK. One can recognise an SAND domain in the interval 182–282; it reads IQTMAASVQR…QKVGQQCGVP (101 aa). The PHD-type 1 zinc finger occupies 298-345; the sequence is EDECAVCHDGGELICCDGCPRAFHLACLSPPLQEIPSGLWRCSCCLQG. Residues 414-418 carry the LXXLL motif 3 motif; sequence LCPLL. The segment at 434 to 475 adopts a PHD-type 2 zinc-finger fold; sequence CSVCGDGTEVLRCAHCAAAFHWRCHFPTAAARPGTNLRCKSC. The disordered stretch occupies residues 472 to 514; sequence CKSCSADSTPTPGTPGEAVPTSGPRPAPGLAKVGDDSASHDPV. Residues 504–514 show a composition bias toward basic and acidic residues; it reads VGDDSASHDPV. Residues 520 to 524 carry the LXXLL motif 4 motif; it reads LESLL.

Homodimer and homotetramer. Interacts with CREBBP. Interacts preferentially with histone H3 that is not methylated at 'Lys-4'. Binds with lower affinity to histone H3 that is monomethylated at 'Lys-4'. Trimethylation of histone H3 at 'Lys-4' or phosphorylation at 'Thr-3' abolish the interaction. Binds with lower affinity to histone H3 that is acetylated at 'Lys-4', or that is acetylated at 'Lys-9' or trimethylated at 'Lys-9'. Binds histone H3 that is dimethylated at 'Arg-2' with very low affinity. In terms of processing, phosphorylated. In terms of tissue distribution, highly expressed in a few cells in the medulla of the thymus (medullary epithelial cells) (at protein level). Expressed in thymic but no peripheral B-cells. In secondary lymphoid organs, expressed in a discrete population of bone marrow-derived toleregenic antigen presenting cells (APCs) called extrathymic AIRE expressing cells (eTAC)(at protein level). Detected at very low levels in thymus, lymph node, liver, brain, ovary, lung, testis, kidney, heart, spleen, bone marrow, skeletal muscle and adrenal gland. Isoforms 1a to 1d predominate, isoforms 2a to 2d are intermediate and isoforms 3a to 3d are expressed at extremely low levels.

The protein resides in the nucleus. The protein localises to the cytoplasm. Functionally, transcription factor playing an essential role to promote self-tolerance in the thymus by regulating the expression of a wide array of self-antigens that have the commonality of being tissue-restricted in their expression pattern in the periphery, called tissue restricted antigens (TRA). Binds to G-doublets in an A/T-rich environment; the preferred motif is a tandem repeat of 5'-. ATTGGTTA-3' combined with a 5'-TTATTA-3' box. Binds to nucleosomes. Binds to chromatin and interacts selectively with histone H3 that is not methylated at 'Lys-4', not phosphorylated at 'Thr-3' and not methylated at 'Arg-2'. Functions as a sensor of histone H3 modifications that are important for the epigenetic regulation of gene expression. Mainly expressed by medullary thymic epithelial cells (mTECs), induces the expression of thousands of tissue-restricted proteins, which are presented on major histocompatibility complex class I (MHC-I) and MHC-II molecules to developing T-cells percolating through the thymic medulla. Also induces self-tolerance through other mechanisms such as the regulation of the mTEC differentiation program. Controls the medullary accumulation of thymic dendritic cells and the development of regulatory T-cell through the regulation of XCL1 expression. Regulates the production of CCR4 and CCR7 ligands in medullary thymic epithelial cells and alters the coordinated maturation and migration of thymocytes. In thimic B-cells, allows the presentation of licensing-dependent endogenous self-anitgen for negative selection. In secondary lymphoid organs, induces functional inactivation of CD4(+) T-cells. Expressed by a distinct bone marrow-derived population, induces self-tolerance through a mechanism that does not require regulatory T-cells and is resitant to innate inflammatory stimuli. The sequence is that of Autoimmune regulator (Aire) from Mus musculus (Mouse).